Here is a 92-residue protein sequence, read N- to C-terminus: MARSIKKGPFVDNHLMKKVEAQEGNQKKTVIKTWSRRSTIFPNFIGITFAVYDGRKHVPVYVTEDMVGHKLGEFAPTRTFKGHAVDDKKTRR.

Belongs to the universal ribosomal protein uS19 family.

Protein S19 forms a complex with S13 that binds strongly to the 16S ribosomal RNA. This is Small ribosomal subunit protein uS19 from Staphylococcus carnosus (strain TM300).